The following is a 426-amino-acid chain: Endoglucanase Z (426 aa).

The N-terminal stretch at 1 to 43 (MPLSYLDKNPVIDSKKHALRKKLFLSCAYFGLSLACLSSNAWA) is a signal peptide. Positions 44–332 (SVEPLSVNGN…VKSIIQSWPY (289 aa)) are catalytic. Glu-176 functions as the Proton donor in the catalytic mechanism. Catalysis depends on Glu-263, which acts as the Nucleophile. The tract at residues 333-366 (KAGSAASATTDPSTDTTTDTTVDEPTTTDTPATA) is linker. The disordered stretch occupies residues 336–367 (SAASATTDPSTDTTTDTTVDEPTTTDTPATAD). Residues 367-426 (DCANANVYPNWVSKDWAGGQPTHNEAGQSIVYKGNLYTANWYTASVPGSDSSWTQVGSCN) form a cellulose-binding region. An intrachain disulfide couples Cys-368 to Cys-425.

The protein belongs to the glycosyl hydrolase 5 (cellulase A) family.

The protein resides in the secreted. It catalyses the reaction Endohydrolysis of (1-&gt;4)-beta-D-glucosidic linkages in cellulose, lichenin and cereal beta-D-glucans.. Its function is as follows. Represents 97% of the global cellulase activity. The polypeptide is Endoglucanase Z (celZ) (Dickeya dadantii (strain 3937) (Erwinia chrysanthemi (strain 3937))).